The chain runs to 383 residues: Probable cell wall hydrolase LytN (383 aa).

The first 49 residues, 1–49 (MFIYYCKECSIMNKQQSKVRYSIRKVSIGILSISIGMFLALGMSNKAYA), serve as a signal peptide directing secretion. The LysM domain maps to 175–219 (QIYTVKKGDTLSAIALKYKTTVSNIQNTNNIANPNLIFIGQKLKV). The 138-residue stretch at 241–378 (NSSTLNYLKT…NYENDMIFIR (138 aa)) folds into the Peptidase C51 domain.

Its subcellular location is the secreted. Its function is as follows. Probably involved in peptidoglycan hydrolysis. The sequence is that of Probable cell wall hydrolase LytN (lytN) from Staphylococcus aureus (strain Mu50 / ATCC 700699).